The primary structure comprises 235 residues: Sugar fermentation stimulation protein homolog (235 aa).

It belongs to the SfsA family.

The chain is Sugar fermentation stimulation protein homolog from Aliivibrio fischeri (strain MJ11) (Vibrio fischeri).